The primary structure comprises 132 residues: ATP synthase epsilon chain (132 aa).

Belongs to the ATPase epsilon chain family. As to quaternary structure, F-type ATPases have 2 components, CF(1) - the catalytic core - and CF(0) - the membrane proton channel. CF(1) has five subunits: alpha(3), beta(3), gamma(1), delta(1), epsilon(1). CF(0) has three main subunits: a, b and c.

The protein resides in the cell membrane. Produces ATP from ADP in the presence of a proton gradient across the membrane. This chain is ATP synthase epsilon chain, found in Desulfitobacterium hafniense (strain DSM 10664 / DCB-2).